A 373-amino-acid chain; its full sequence is MKVPFLQLLCLNAALASANVVKGAAQGFAAGVTGGGDITPSYPKTNEELVSLLESDEPQVVVLTKTFEFIGTEGTTTENGCAPWGTGKSCQLAINSNGWCGKNPVVTITYDNAAKNGIHIKSNKTLVGEGDKGVLSGKGLYFEGGVSNIIVQNIKITNLNPGFVWGGDAFTFFGADLIWIDHCETSLTGRQHYVTGFHPNTRMTWSNNFLNGVTTHSAGCDDHHYWTMELVGPGDQITFQNNYVYHTTGRGPALSGTTLFHAVNSVWSSIPGHAIEGGDKGRGLFEGCFFEDVVEIAPAKPENQLFSASEANAASCKSALGRACQANSYSKSGAFGSSETGFFKDFAGLTIAPAGSATDALAYVPKNCGIGRL.

The signal sequence occupies residues 1-18 (MKVPFLQLLCLNAALASA). Cystine bridges form between Cys-81-Cys-100 and Cys-90-Cys-220. N-linked (GlcNAc...) asparagine glycosylation is present at Asn-123. Arg-250 is an active-site residue. Cys-316 and Cys-324 form a disulfide bridge.

The protein belongs to the polysaccharide lyase 1 family.

The protein localises to the secreted. It carries out the reaction Eliminative cleavage of (1-&gt;4)-alpha-D-galacturonan methyl ester to give oligosaccharides with 4-deoxy-6-O-methyl-alpha-D-galact-4-enuronosyl groups at their non-reducing ends.. Pectinolytic enzymes consist of four classes of enzymes: pectin lyase, polygalacturonase, pectin methylesterase and rhamnogalacturonase. Among pectinolytic enzymes, pectin lyase is the most important in depolymerization of pectin, since it cleaves internal glycosidic bonds of highly methylated pectins. This Aspergillus niger (strain ATCC MYA-4892 / CBS 513.88 / FGSC A1513) protein is Probable pectin lyase C (pelC).